The sequence spans 295 residues: Pyridoxal 5'-phosphate synthase subunit PdxS (295 aa).

Position 25 (Asp-25) interacts with D-ribose 5-phosphate. Lys-82 serves as the catalytic Schiff-base intermediate with D-ribose 5-phosphate. Gly-154 serves as a coordination point for D-ribose 5-phosphate. Arg-166 is a D-glyceraldehyde 3-phosphate binding site. Residues Gly-215 and 236–237 (GS) each bind D-ribose 5-phosphate.

It belongs to the PdxS/SNZ family. In the presence of PdxT, forms a dodecamer of heterodimers.

It catalyses the reaction aldehydo-D-ribose 5-phosphate + D-glyceraldehyde 3-phosphate + L-glutamine = pyridoxal 5'-phosphate + L-glutamate + phosphate + 3 H2O + H(+). Its pathway is cofactor biosynthesis; pyridoxal 5'-phosphate biosynthesis. Its function is as follows. Catalyzes the formation of pyridoxal 5'-phosphate from ribose 5-phosphate (RBP), glyceraldehyde 3-phosphate (G3P) and ammonia. The ammonia is provided by the PdxT subunit. Can also use ribulose 5-phosphate and dihydroxyacetone phosphate as substrates, resulting from enzyme-catalyzed isomerization of RBP and G3P, respectively. This is Pyridoxal 5'-phosphate synthase subunit PdxS from Pasteurella multocida (strain Pm70).